Reading from the N-terminus, the 29-residue chain is Cyclotide psyleio B (29 aa).

A cross-link (cyclopeptide (Gly-Arg)) is located at residues 1-29 (GDLPICGETCFGGTCNTPGCVCAWPVCNR). Intrachain disulfides connect Cys6/Cys20, Cys10/Cys22, and Cys15/Cys27.

This is a cyclic peptide.

Probably participates in a plant defense mechanism. The chain is Cyclotide psyleio B from Psychotria brachyceras.